Consider the following 117-residue polypeptide: Protein Rev (117 aa).

Phosphoserine; by host CK2 is present on residues S5 and S8. The interval 18–26 (LIKILYQSN) is homomultimerization. Residues 24-49 (QSNPPPNTEGTTRQARRNRRRRWRAR) are disordered. A Nuclear localization signal and RNA-binding (RRE) motif is present at residues 35–51 (TRQARRNRRRRWRARQR). A compositionally biased stretch (basic residues) spans 37-49 (QARRNRRRRWRAR). The Nuclear export signal and binding to XPO1 signature appears at 74 to 85 (LQLPPLERLTLN). A phosphoserine; by host mark is found at S93 and S100. Polar residues predominate over residues 93–105 (SGTQGVGSPQISV). Residues 93 to 117 (SGTQGVGSPQISVESPAILGSGTEE) are disordered.

Belongs to the HIV-1 REV protein family. Homomultimer; when bound to the RRE. Multimeric assembly is essential for activity and may involve XPO1. Binds to human KPNB1, XPO1, TNPO1, RANBP5 and IPO7. Interacts with the viral Integrase. Interacts with human KHDRBS1. Interacts with human NAP1; this interaction decreases Rev multimerization and stimulates its activity. Interacts with human DEAD-box helicases DDX3 and DDX24; these interactions may serve for viral RNA export to the cytoplasm and packaging, respectively. Interacts with human PSIP1; this interaction may inhibit HIV-1 DNA integration by promoting dissociation of the Integrase-LEDGF/p75 complex. Asymmetrically arginine dimethylated at one site by host PRMT6. Methylation impairs the RNA-binding activity and export of viral RNA from the nucleus to the cytoplasm. Post-translationally, phosphorylated by protein kinase CK2. Presence of, and maybe binding to the N-terminus of the regulatory beta subunit of CK2 is necessary for CK2-mediated Rev's phosphorylation.

Its subcellular location is the host nucleus. The protein resides in the host nucleolus. It localises to the host cytoplasm. Functionally, escorts unspliced or incompletely spliced viral pre-mRNAs (late transcripts) out of the nucleus of infected cells. These pre-mRNAs carry a recognition sequence called Rev responsive element (RRE) located in the env gene, that is not present in fully spliced viral mRNAs (early transcripts). This function is essential since most viral proteins are translated from unspliced or partially spliced pre-mRNAs which cannot exit the nucleus by the pathway used by fully processed cellular mRNAs. Rev itself is translated from a fully spliced mRNA that readily exits the nucleus. Rev's nuclear localization signal (NLS) binds directly to KPNB1/Importin beta-1 without previous binding to KPNA1/Importin alpha-1. KPNB1 binds to the GDP bound form of RAN (Ran-GDP) and targets Rev to the nucleus. In the nucleus, the conversion from Ran-GDP to Ran-GTP dissociates Rev from KPNB1 and allows Rev's binding to the RRE in viral pre-mRNAs. Rev multimerization on the RRE via cooperative assembly exposes its nuclear export signal (NES) to the surface. Rev can then form a complex with XPO1/CRM1 and Ran-GTP, leading to nuclear export of the complex. Conversion from Ran-GTP to Ran-GDP mediates dissociation of the Rev/RRE/XPO1/RAN complex, so that Rev can return to the nucleus for a subsequent round of export. Beside KPNB1, also seems to interact with TNPO1/Transportin-1, RANBP5/IPO5 and IPO7/RANBP7 for nuclear import. The nucleoporin-like HRB/RIP is an essential cofactor that probably indirectly interacts with Rev to release HIV RNAs from the perinuclear region to the cytoplasm. This is Protein Rev from Human immunodeficiency virus type 1 group M subtype A (isolate MAL) (HIV-1).